Consider the following 237-residue polypeptide: Putative anti-FlhC(2)FlhD(4) factor YdiV (237 aa).

Positions 1 to 237 (MKIFLENLYH…INQITTLVQR (237 aa)) constitute an EAL domain.

This sequence belongs to the YdiV family.

In terms of biological role, upon overexpression acts as a novel anti-FlhC(2)FlhD(4) factor, decreasing its DNA-binding activity, able to negatively regulate expression of flagellar class II operons including FliC. The polypeptide is Putative anti-FlhC(2)FlhD(4) factor YdiV (ydiV) (Escherichia coli (strain K12)).